We begin with the raw amino-acid sequence, 376 residues long: uncharacterized protein (376 aa).

It belongs to the NAD(P)-dependent epimerase/dehydratase family.

This is an uncharacterized protein from Mycobacterium bovis (strain ATCC BAA-935 / AF2122/97).